The chain runs to 467 residues: Hydroxyacid-oxoacid transhydrogenase, mitochondrial (467 aa).

Lys-445 is modified (N6-acetyllysine). Position 452 is a phosphoserine (Ser-452).

Belongs to the iron-containing alcohol dehydrogenase family. Hydroxyacid-oxoacid transhydrogenase subfamily. In terms of tissue distribution, only expressed in adult liver.

Its subcellular location is the mitochondrion. It carries out the reaction (S)-3-hydroxybutanoate + 2-oxoglutarate = (R)-2-hydroxyglutarate + acetoacetate. It catalyses the reaction 4-hydroxybutanoate + 2-oxoglutarate = (R)-2-hydroxyglutarate + succinate semialdehyde. Catalyzes the cofactor-independent reversible oxidation of gamma-hydroxybutyrate (GHB) to succinic semialdehyde (SSA) coupled to reduction of 2-ketoglutarate (2-KG) to D-2-hydroxyglutarate (D-2-HG). D,L-3-hydroxyisobutyrate and L-3-hydroxybutyrate (L-3-OHB) are also substrates for HOT with 10-fold lower activities. The protein is Hydroxyacid-oxoacid transhydrogenase, mitochondrial (ADHFE1) of Homo sapiens (Human).